We begin with the raw amino-acid sequence, 196 residues long: Imidazoleglycerol-phosphate dehydratase (196 aa).

This sequence belongs to the imidazoleglycerol-phosphate dehydratase family.

The protein resides in the cytoplasm. It catalyses the reaction D-erythro-1-(imidazol-4-yl)glycerol 3-phosphate = 3-(imidazol-4-yl)-2-oxopropyl phosphate + H2O. Its pathway is amino-acid biosynthesis; L-histidine biosynthesis; L-histidine from 5-phospho-alpha-D-ribose 1-diphosphate: step 6/9. The sequence is that of Imidazoleglycerol-phosphate dehydratase from Dehalococcoides mccartyi (strain ATCC BAA-2266 / KCTC 15142 / 195) (Dehalococcoides ethenogenes (strain 195)).